We begin with the raw amino-acid sequence, 257 residues long: BTB/POZ domain-containing protein kctd15-like (257 aa).

A phosphoserine mark is found at serine 9 and serine 12. The BTB domain occupies alanine 30 to glutamate 100.

The protein is BTB/POZ domain-containing protein kctd15-like (kctd15l) of Danio rerio (Zebrafish).